The chain runs to 1009 residues: Protein-tyrosine kinase 2-beta (1009 aa).

Residues 39–359 form the FERM domain; that stretch reads RILKVCFYSN…GYCRLQGEHQ (321 aa). A phosphoserine mark is found at Ser-361, Ser-375, and Ser-399. Tyr-402 bears the Phosphotyrosine; by autocatalysis mark. Residues 425-683 form the Protein kinase domain; it reads VVLNRILGEG…ELVCSLSDVY (259 aa). ATP is bound by residues 431 to 439, Lys-457, and 503 to 509; these read LGEGFFGEV and ELYPYGE. The active-site Proton acceptor is the Asp-549. Tyr-579 carries the phosphotyrosine modification. Position 580 is a phosphotyrosine; by SRC, FYN and LCK (Tyr-580). The disordered stretch occupies residues 701–725; sequence TPKILEPTAFQEPPPKPSRPKYRPP. The span at 712 to 725 shows a compositional bias: pro residues; the sequence is EPPPKPSRPKYRPP. Tyr-722 carries the post-translational modification Phosphotyrosine. Position 762 is a phosphoserine (Ser-762). Thr-765 carries the phosphothreonine modification. Positions 801–1009 are interaction with TGFB1I1; it reads KVKMRQILDK…LANLAHPPAE (209 aa). 2 positions are modified to phosphotyrosine: Tyr-819 and Tyr-834. Phosphoserine is present on Ser-839. Thr-842 is subject to Phosphothreonine. Phosphotyrosine is present on Tyr-849. Phosphoserine is present on Ser-866. The interval 868–1009 is focal adhesion targeting (FAT); it reads QPTANLDRTD…LANLAHPPAE (142 aa). Tyr-881 is subject to Phosphotyrosine; by SRC.

The protein belongs to the protein kinase superfamily. Tyr protein kinase family. FAK subfamily. Homodimer, or homooligomer. Interacts with SIRPA and SH2D3C. Interacts with ARHGAP10. Interacts with DLG4. Interacts with KCNA2. Interacts with NPHP1, ASAP1, ASAP2, ARHGAP26, SKAP2 and TGFB1I1. The Tyr-402 phosphorylated form interacts with SRC (via SH2 domain) and SRC family members. Forms a signaling complex with EPHA1, LCK and phosphatidylinositol 3-kinase; upon activation by EFNA1. Interacts with GRB2 (via SH2 domain). Interacts with P53/TP53 and MDM2. Interacts with MYLK. Interacts with BCAR1. Interacts with PDPK1. Interacts (hypophosphorylated) with PXN. Interacts with RB1CC1. Interacts with RHOU. Interacts with VAV1. Interacts with LPXN and PTPN12. Phosphorylated on tyrosine residues in response to various stimuli that elevate the intracellular calcium concentration; this activation is indirect and may be mediated by production of reactive oxygen species (ROS). Tyr-402 is the major autophosphorylation site, but other kinases can also phosphorylate Tyr-402. Autophosphorylation occurs in trans, i.e. one subunit of the dimeric receptor phosphorylates tyrosine residues on the other subunit. Phosphorylation at Tyr-402 promotes interaction with SRC and SRC family members, leading to phosphorylation at Tyr-579; Tyr-580 and Tyr-881. Phosphorylation at Tyr-881 is important for interaction with GRB2. Phosphorylated on tyrosine residues upon activation of FGR and PKC. Recruitment by NPHP1 to cell matrix adhesions initiates Tyr-402 phosphorylation. In monocytes, adherence to substrata is required for tyrosine phosphorylation and kinase activation. Angiotensin II, thapsigargin and L-alpha-lysophosphatidic acid (LPA) also induce autophosphorylation and increase kinase activity. Phosphorylation by MYLK promotes ITGB2 activation and is thus essential to trigger neutrophil transmigration during lung injury. Dephosphorylated by PTPN12. In terms of tissue distribution, most abundant in the brain, with highest levels in amygdala and hippocampus. Low levels in kidney (at protein level). Also expressed in spleen and lymphocytes.

Its subcellular location is the cytoplasm. It localises to the perinuclear region. It is found in the cell membrane. The protein localises to the cell junction. The protein resides in the focal adhesion. Its subcellular location is the cell projection. It localises to the lamellipodium. It is found in the cell cortex. The protein localises to the nucleus. The catalysed reaction is L-tyrosyl-[protein] + ATP = O-phospho-L-tyrosyl-[protein] + ADP + H(+). Its activity is regulated as follows. Activated in response to stimuli that lead to increased intracellular Ca(2+) levels; this activation is indirect and may be mediated by calcium-mediated production of reactive oxygen species (ROS). Activated by autophosphorylation at Tyr-402; this creates a binding site for SRC family kinases and leads to phosphorylation at additional tyrosine residues. Phosphorylation at Tyr-402, Tyr-579 and Tyr-580 is required for optimal kinase activity. Inhibited by PF-562,271, BIRB796, PF-4618433 and by PF-431396, PF-2318841 and their derivatives. Inhibited by sulfoximine-substituted trifluoromethylpyrimidines. Inhibited by 4-amino and 5-aryl substituted pyridinone compounds. Its function is as follows. Non-receptor protein-tyrosine kinase that regulates reorganization of the actin cytoskeleton, cell polarization, cell migration, adhesion, spreading and bone remodeling. Plays a role in the regulation of the humoral immune response, and is required for normal levels of marginal B-cells in the spleen and normal migration of splenic B-cells. Required for normal macrophage polarization and migration towards sites of inflammation. Regulates cytoskeleton rearrangement and cell spreading in T-cells, and contributes to the regulation of T-cell responses. Promotes osteoclastic bone resorption; this requires both PTK2B/PYK2 and SRC. May inhibit differentiation and activity of osteoprogenitor cells. Functions in signaling downstream of integrin and collagen receptors, immune receptors, G-protein coupled receptors (GPCR), cytokine, chemokine and growth factor receptors, and mediates responses to cellular stress. Forms multisubunit signaling complexes with SRC and SRC family members upon activation; this leads to the phosphorylation of additional tyrosine residues, creating binding sites for scaffold proteins, effectors and substrates. Regulates numerous signaling pathways. Promotes activation of phosphatidylinositol 3-kinase and of the AKT1 signaling cascade. Promotes activation of NOS3. Regulates production of the cellular messenger cGMP. Promotes activation of the MAP kinase signaling cascade, including activation of MAPK1/ERK2, MAPK3/ERK1 and MAPK8/JNK1. Promotes activation of Rho family GTPases, such as RHOA and RAC1. Recruits the ubiquitin ligase MDM2 to P53/TP53 in the nucleus, and thereby regulates P53/TP53 activity, P53/TP53 ubiquitination and proteasomal degradation. Acts as a scaffold, binding to both PDPK1 and SRC, thereby allowing SRC to phosphorylate PDPK1 at 'Tyr-9, 'Tyr-373', and 'Tyr-376'. Promotes phosphorylation of NMDA receptors by SRC family members, and thereby contributes to the regulation of NMDA receptor ion channel activity and intracellular Ca(2+) levels. May also regulate potassium ion transport by phosphorylation of potassium channel subunits. Phosphorylates SRC; this increases SRC kinase activity. Phosphorylates ASAP1, NPHP1, KCNA2 and SHC1. Promotes phosphorylation of ASAP2, RHOU and PXN; this requires both SRC and PTK2/PYK2. In Homo sapiens (Human), this protein is Protein-tyrosine kinase 2-beta (PTK2B).